A 153-amino-acid chain; its full sequence is Small ribosomal subunit protein bS16 (153 aa).

Over residues 121 to 131 (AEAAAKAKAEA) the composition is skewed to basic and acidic residues. Residues 121–153 (AEAAAKAKAEAEAAAAAEEAPAEEAAEEAPAED) are disordered. The segment covering 140–153 (APAEEAAEEAPAED) has biased composition (acidic residues).

This sequence belongs to the bacterial ribosomal protein bS16 family.

This Bifidobacterium longum (strain DJO10A) protein is Small ribosomal subunit protein bS16.